We begin with the raw amino-acid sequence, 836 residues long: ATP-binding cassette sub-family B member 6 (836 aa).

The Lumenal portion of the chain corresponds to 1–26 (MVTVGNYCEAEGPAGPAWTQNGLSPC). Positions 1–205 (MVTVGNYCEA…SGGLFILGLW (205 aa)) are required for the lysosomal targeting. Residues 1–236 (MVTVGNYCEA…RNQGRSTDPR (236 aa)) form a required for ATPase activity region. C8 and C26 are joined by a disulfide. Residues 27-47 (FFYTLVPSTLMTLGVLALVLV) traverse the membrane as a helical segment. The Cytoplasmic segment spans residues 48–72 (LPCRRREVPAGTEELSWAAGPRVAP). Residues 73–93 (YALQLSLAILQMALPLASLAG) form a helical membrane-spanning segment. Residues 94-106 (RVGTARGVRLPGY) are Lumenal-facing. A helical membrane pass occupies residues 107–127 (LLLASVLESLASACGLWLLVV). The Cytoplasmic portion of the chain corresponds to 128–147 (ERSQARQSLAMGVWMKFRHS). The chain crosses the membrane as a helical span at residues 148 to 168 (LGLLLLWTVTFAAENLVLVSW). The Lumenal segment spans residues 169–185 (NSPQWWWSRADLGQQVQ). The helical transmembrane segment at 186-206 (FGLWVLRYMTSGGLFILGLWA) threads the bilayer. The Cytoplasmic segment spans residues 207-264 (PGLRPQSYTLHVNEEDQDGGRNQGRSTDPRSTWRDLGRKLRLLSGYLWPRGSPSLQLT). A helical transmembrane segment spans residues 265–285 (VLLCMGLMGLDRALNVLVPIF). One can recognise an ABC transmembrane type-1 domain in the interval 265–556 (VLLCMGLMGL…FGTYYRMIQT (292 aa)). Topologically, residues 286 to 305 (YRDIVNLLTSKAPWSSLAWT) are lumenal. Residues 306–326 (VTTYVFLKFLQGGGTGSTGFV) form a helical membrane-spanning segment. Over 327-375 (SNLRTFLWIRVQQFTSRGVELRLFSHLHELSLRWHLGRRTGEVLRIVDR) the chain is Cytoplasmic. Residues 376–396 (GTSSVTGLLSYLVFNIIPTLA) traverse the membrane as a helical segment. Position 397 (D397) is a topological domain, lumenal. The chain crosses the membrane as a helical span at residues 398–418 (IIIGIIYFSMFFNAWFGLIVF). The Cytoplasmic segment spans residues 419–499 (LCMSLYLILT…STASLVLLNQ (81 aa)). The helical transmembrane segment at 500-520 (TQNMVIGFGLLAGSLLCAYFV) threads the bilayer. Residues 521 to 529 (SERRLQVGD) lie on the Lumenal side of the membrane. Residues 530-550 (FVLFGTYITQLYMPLNWFGTY) form a helical membrane-spanning segment. Topologically, residues 551 to 836 (YRMIQTNFID…QGQETVPEDS (286 aa)) are cytoplasmic. The 235-residue stretch at 590 to 824 (VEFENVHFSY…GGVYAEMWQL (235 aa)) folds into the ABC transporter domain. ATP contacts are provided by residues Y599 and 623–634 (GPSGAGKSTILR).

Belongs to the ABC transporter superfamily. ABCB family. Heavy Metal importer (TC 3.A.1.210) subfamily. In terms of assembly, homodimer. In terms of processing, N-glycosylated. As to expression, ubiquitously expressed. Highly expressed in testis by meiotic pachytene spermatocytes and post-meiotic early spermatids.

It is found in the cell membrane. Its subcellular location is the mitochondrion outer membrane. The protein localises to the endoplasmic reticulum membrane. The protein resides in the golgi apparatus membrane. It localises to the endosome membrane. It is found in the lysosome membrane. Its subcellular location is the late endosome membrane. The protein localises to the early endosome membrane. The protein resides in the secreted. It localises to the extracellular exosome. It is found in the mitochondrion. Its subcellular location is the endosome. The protein localises to the multivesicular body membrane. The protein resides in the melanosome membrane. It catalyses the reaction heme b(in) + ATP + H2O = heme b(out) + ADP + phosphate + H(+). The enzyme catalyses coproporphyrin III(in) + ATP + H2O = coproporphyrin III(out) + ADP + phosphate + H(+). It carries out the reaction pheophorbide a(in) + ATP + H2O = pheophorbide a(out) + ADP + phosphate + H(+). The catalysed reaction is coproporphyrinogen III(in) + ATP + H2O = coproporphyrinogen III(out) + ADP + phosphate + H(+). It catalyses the reaction protoporphyrin IX(in) + ATP + H2O = protoporphyrin IX(out) + ADP + phosphate + H(+). The enzyme catalyses coproporphyrin I(in) + ATP + H2O = coproporphyrin I(out) + ADP + phosphate + H(+). It carries out the reaction uroporphyrin I(in) + ATP + H2O = uroporphyrin I(out) + ADP + phosphate + H(+). The catalysed reaction is uroporphyrin III(in) + ATP + H2O = uroporphyrin III(out) + ADP + phosphate + H(+). Its function is as follows. ATP-dependent transporter that catalyzes the transport of a broad-spectrum of porphyrins from the cytoplasm to the extracellular space through the plasma membrane or into the vesicle lumen. May also function as an ATP-dependent importer of porphyrins from the cytoplasm into the mitochondria, in turn may participate in the de novo heme biosynthesis regulation and in the coordination of heme and iron homeostasis during phenylhydrazine stress. May play a key role in the early steps of melanogenesis producing PMEL amyloid fibrils. In vitro, it confers to cells a resistance to toxic metal such as arsenic and cadmium and against chemotherapeutics agent such as 5-fluorouracil, SN-38 and vincristin. In addition may play a role in the transition metal homeostasis. This is ATP-binding cassette sub-family B member 6 from Rattus norvegicus (Rat).